A 431-amino-acid chain; its full sequence is C2H2 type master regulator of conidiophore development brlA (431 aa).

Disordered stretches follow at residues 29–51, 211–275, and 287–306; these read MTSS…SHGS, TPQQ…SEEY, and IRTH…VRSN. The segment covering 30-48 has biased composition (low complexity); the sequence is TSSFSPLESPTPTPTSLYS. A compositionally biased stretch (polar residues) spans 225-265; it reads PSSNYSDFPASLQTFKPHTPSTPVRSLSLGTPRSDTPQSRM. Residues 287–302 show a composition bias toward basic residues; the sequence is IRTHRQPSRKPSKKQL. C2H2-type zinc fingers lie at residues 321–345 and 351–376; these read FKCK…MKSH and HVCW…TKTH. Positions 390–412 are disordered; it reads DETSPDYDPEFRGQLTPDGRPIY.

It localises to the nucleus. Functionally, brlA, abaA and wetA are pivotal regulators of conidiophore development and conidium maturation. They act individually and together to regulate their own expression and that of numerous other sporulation-specific genes. Binds promoters of target genes at brlA response elements (BREs) containing the conserved sequence 5'-(C/A)(A/G)AGGG(G/A)-3'. Regulates the expression levels of seven secondary metabolism gene clusters including a down-regulated cluster putatively involved in the biosynthesis of the mycotoxins roquefortine C and meleagrin. Negatively regulates the expression of cellulase genes. This Penicillium oxalicum (strain 114-2 / CGMCC 5302) (Penicillium decumbens) protein is C2H2 type master regulator of conidiophore development brlA.